Consider the following 619-residue polypeptide: Phosphomethylpyrimidine synthase (619 aa).

The span at 93–104 (IKPEDNGLKGPD) shows a compositional bias: basic and acidic residues. The tract at residues 93-114 (IKPEDNGLKGPDRSGGVTPFPN) is disordered. Substrate is bound by residues Asn217, Met246, Tyr275, His311, 331 to 333 (SRG), 372 to 375 (DGLR), and Glu411. His415 is a Zn(2+) binding site. Tyr438 is a binding site for substrate. His479 serves as a coordination point for Zn(2+). Positions 559, 562, and 567 each coordinate [4Fe-4S] cluster.

The protein belongs to the ThiC family. Homodimer. The cofactor is [4Fe-4S] cluster.

The catalysed reaction is 5-amino-1-(5-phospho-beta-D-ribosyl)imidazole + S-adenosyl-L-methionine = 4-amino-2-methyl-5-(phosphooxymethyl)pyrimidine + CO + 5'-deoxyadenosine + formate + L-methionine + 3 H(+). It functions in the pathway cofactor biosynthesis; thiamine diphosphate biosynthesis. Its function is as follows. Catalyzes the synthesis of the hydroxymethylpyrimidine phosphate (HMP-P) moiety of thiamine from aminoimidazole ribotide (AIR) in a radical S-adenosyl-L-methionine (SAM)-dependent reaction. The protein is Phosphomethylpyrimidine synthase of Rhizorhabdus wittichii (strain DSM 6014 / CCUG 31198 / JCM 15750 / NBRC 105917 / EY 4224 / RW1) (Sphingomonas wittichii).